The primary structure comprises 258 residues: Thrombin-like enzyme ancrod-2 (258 aa).

Positions 1-18 (MVLIRVLANLVILQLSYA) are cleaved as a signal peptide. Residues 19–24 (QKSSEL) constitute a propeptide that is removed on maturation. Residues 25 to 251 (VIGGDECNIN…HLHWILSIMA (227 aa)) form the Peptidase S1 domain. Intrachain disulfides connect cysteine 31/cysteine 165, cysteine 52/cysteine 68, cysteine 102/cysteine 256, cysteine 144/cysteine 212, cysteine 176/cysteine 191, and cysteine 202/cysteine 227. Active-site charge relay system residues include histidine 67 and aspartate 112. Residues asparagine 123 and asparagine 172 are each glycosylated (N-linked (GlcNAc...) asparagine). Serine 206 (charge relay system) is an active-site residue. An N-linked (GlcNAc...) asparagine glycan is attached at asparagine 253.

This sequence belongs to the peptidase S1 family. Snake venom subfamily. In terms of assembly, monomer. In terms of tissue distribution, expressed by the venom gland.

Its subcellular location is the secreted. It carries out the reaction Selective cleavage of Arg-|-Xaa bond in fibrinogen, to form fibrin, and release fibrinopeptide A. The specificity of further degradation of fibrinogen varies with species origin of the enzyme.. Its function is as follows. Thrombin-like snake venom serine protease. Cleaves fibrinogen (FGA) to split of fibrinopeptides AM, AO, and AY; the aberrant fibrinogen is then incapable of being cross-linked, forming easily dispersible clots. The protein is Thrombin-like enzyme ancrod-2 of Calloselasma rhodostoma (Malayan pit viper).